Here is a 263-residue protein sequence, read N- to C-terminus: H-2 class II histocompatibility antigen, A-U beta chain (263 aa).

An N-terminal signal peptide occupies residues 1-27 (MALQIPSLLLLAAVVVLMVLSSPGTEG). The interval 28–120 (GDSERHFVVQ…TEVPTSLRRL (93 aa)) is beta-1. The Extracellular segment spans residues 28–224 (GDSERHFVVQ…RAQSESARSK (197 aa)). 2 disulfides stabilise this stretch: Cys-42-Cys-104 and Cys-143-Cys-199. Asn-46 is a glycosylation site (N-linked (GlcNAc...) asparagine). The interval 121-214 (EQPNVVISLS…SLKSPITVEW (94 aa)) is beta-2. Residues 123 to 211 (PNVVISLSRT…EHPSLKSPIT (89 aa)) enclose the Ig-like C1-type domain. Residues 215–224 (RAQSESARSK) are connecting peptide. Residues 225 to 245 (MLSGIGGCVLGVIFLGLGLFI) traverse the membrane as a helical segment. At 246–263 (RHRSQKGPRGPPPAGLLQ) the chain is on the cytoplasmic side.

The protein belongs to the MHC class II family.

The protein localises to the membrane. The polypeptide is H-2 class II histocompatibility antigen, A-U beta chain (Mus musculus (Mouse)).